Here is a 501-residue protein sequence, read N- to C-terminus: GMP synthase [glutamine-hydrolyzing] (501 aa).

In terms of domain architecture, Glutamine amidotransferase type-1 spans 1–185; sequence MVLVVDYGSQ…LFNVCKLEKN (185 aa). C75 acts as the Nucleophile in catalysis. Catalysis depends on residues H159 and E161. The region spanning 186–376 is the GMPS ATP-PPase domain; the sequence is WKIGDLVEEK…LGIPDRIINR (191 aa). Residue 213-219 coordinates ATP; sequence SGGVDSS.

Homodimer.

It carries out the reaction XMP + L-glutamine + ATP + H2O = GMP + L-glutamate + AMP + diphosphate + 2 H(+). Its pathway is purine metabolism; GMP biosynthesis; GMP from XMP (L-Gln route): step 1/1. Catalyzes the synthesis of GMP from XMP. This chain is GMP synthase [glutamine-hydrolyzing] (guaA), found in Thermotoga maritima (strain ATCC 43589 / DSM 3109 / JCM 10099 / NBRC 100826 / MSB8).